A 630-amino-acid polypeptide reads, in one-letter code: 1-deoxy-D-xylulose-5-phosphate synthase (630 aa).

Residues H72 and 113–115 (GHS) contribute to the thiamine diphosphate site. D144 lines the Mg(2+) pocket. Residues 145–146 (GA), N173, Y284, and E367 contribute to the thiamine diphosphate site. Residue N173 participates in Mg(2+) binding.

The protein belongs to the transketolase family. DXPS subfamily. Homodimer. Mg(2+) is required as a cofactor. The cofactor is thiamine diphosphate.

It catalyses the reaction D-glyceraldehyde 3-phosphate + pyruvate + H(+) = 1-deoxy-D-xylulose 5-phosphate + CO2. The protein operates within metabolic intermediate biosynthesis; 1-deoxy-D-xylulose 5-phosphate biosynthesis; 1-deoxy-D-xylulose 5-phosphate from D-glyceraldehyde 3-phosphate and pyruvate: step 1/1. Functionally, catalyzes the acyloin condensation reaction between C atoms 2 and 3 of pyruvate and glyceraldehyde 3-phosphate to yield 1-deoxy-D-xylulose-5-phosphate (DXP). The polypeptide is 1-deoxy-D-xylulose-5-phosphate synthase (Bacillus mycoides (strain KBAB4) (Bacillus weihenstephanensis)).